Here is a 768-residue protein sequence, read N- to C-terminus: Eukaryotic elongation factor 2 kinase (768 aa).

The segment covering M1 to P17 has biased composition (polar residues). Residues M1 to A21 are disordered. One can recognise an Alpha-type protein kinase domain in the interval R102–F309. G279 to G284 is an ATP binding site. Positions S402–D411 are enriched in acidic residues. The interval S402 to K446 is disordered.

It belongs to the protein kinase superfamily. Alpha-type protein kinase family. As to quaternary structure, monomer or homodimer. Interacts with cmd-1 in the presence of Ca(2+).

The catalysed reaction is [translation elongation factor 2] + ATP = [translation elongation factor 2]-phosphate + ADP + H(+). Its activity is regulated as follows. Calcium(2+)/calmodulin dependent activity. Undergoes calcium/calmodulin-dependent intramolecular autophosphorylation, and this results in it becoming partially calcium/calmodulin-independent. Phosphorylates elongation factor-2 (eEF-2) at two threonine residues that are conserved in all eukaryotes and are located within a GTP-binding domain. Calcium(2+)/calmodulin dependent activity. Inactivates eEF-2 by catalyzing its phosphorylation. eEF-2 catalyzes the movement of the ribosome along mRNA during translation in eukaryotic cells. This Caenorhabditis elegans protein is Eukaryotic elongation factor 2 kinase (efk-1).